Reading from the N-terminus, the 566-residue chain is Liver carboxylesterase 1 (566 aa).

The N-terminal stretch at methionine 1 to glycine 18 is a signal peptide. Residue asparagine 79 is glycosylated (N-linked (GlcNAc...) asparagine). Cysteine 87 and cysteine 116 are joined by a disulfide. Serine 221 serves as the catalytic Acyl-ester intermediate. Cysteines 274 and 285 form a disulfide. Glutamate 354 functions as the Charge relay system in the catalytic mechanism. Serine 379 is subject to Phosphoserine. The active-site Charge relay system is histidine 467.

This sequence belongs to the type-B carboxylesterase/lipase family. As to quaternary structure, homotrimer and homohexamer. Binds to beta-glucuronidase.

It is found in the endoplasmic reticulum lumen. The protein resides in the cytoplasm. The protein localises to the lipid droplet. The enzyme catalyses a carboxylic ester + H2O = an alcohol + a carboxylate + H(+). It carries out the reaction cholesteryl (9Z-octadecenoate) + H2O = cholesterol + (9Z)-octadecenoate + H(+). The catalysed reaction is 2-(5Z,8Z,11Z,14Z-eicosatetraenoyl)-glycerol + H2O = glycerol + (5Z,8Z,11Z,14Z)-eicosatetraenoate + H(+). It catalyses the reaction prostaglandin E2 1-glyceryl ester + H2O = prostaglandin E2 + glycerol + H(+). The enzyme catalyses a cholesterol ester + H2O = cholesterol + a fatty acid + H(+). It carries out the reaction prostaglandin F2alpha 1-glyceryl ester + H2O = prostaglandin F2alpha + glycerol + H(+). Functionally, involved in the detoxification of xenobiotics and in the activation of ester and amide prodrugs. Hydrolyzes aromatic and aliphatic esters, but has no catalytic activity toward amides or a fatty acyl-CoA ester. Displays fatty acid ethyl ester synthase activity, catalyzing the ethyl esterification of oleic acid to ethyloleate. Converts monoacylglycerides to free fatty acids and glycerol. Hydrolyzes of 2-arachidonoylglycerol and prostaglandins. Hydrolyzes cellular cholesteryl esters to free cholesterols and promotes reverse cholesterol transport (RCT) by facilitating both the initial and final steps in the process. First of all, allows free cholesterol efflux from macrophages to extracellular cholesterol acceptors and secondly, releases free cholesterol from lipoprotein-delivered cholesteryl esters in the liver for bile acid synthesis or direct secretion into the bile. This Macaca fascicularis (Crab-eating macaque) protein is Liver carboxylesterase 1.